Here is a 135-residue protein sequence, read N- to C-terminus: Ribonuclease VapC26 (135 aa).

One can recognise a PINc domain in the interval 1–118 (MIIDTSALLA…TRTILTLDRR (118 aa)). The Mg(2+) site is built by D4 and D97.

It belongs to the PINc/VapC protein family. The cofactor is Mg(2+).

In terms of biological role, toxic component of a type II toxin-antitoxin (TA) system. An RNase. Upon expression in M.smegmatis inhibits colony formation. Its toxic effect is neutralized by coexpression with cognate antitoxin VapB26. This chain is Ribonuclease VapC26, found in Mycobacterium tuberculosis (strain ATCC 25618 / H37Rv).